A 279-amino-acid polypeptide reads, in one-letter code: Putative hydroxypyruvate isomerase (279 aa).

Catalysis depends on proton donor/acceptor residues Glu-155 and Glu-256. The disordered stretch occupies residues 260–279 (GDDPSAQSFSWLPAGARAAR).

Belongs to the hyi family.

The catalysed reaction is 3-hydroxypyruvate = 2-hydroxy-3-oxopropanoate. Catalyzes the reversible isomerization between hydroxypyruvate and 2-hydroxy-3-oxopropanoate (also termed tartronate semialdehyde). The chain is Putative hydroxypyruvate isomerase from Streptomyces coelicolor (strain ATCC BAA-471 / A3(2) / M145).